The chain runs to 376 residues: Queuine tRNA-ribosyltransferase (376 aa).

The Proton acceptor role is filled by Asp93. Substrate is bound by residues 93 to 97 (DSGGF), Asp147, Gln191, and Gly218. The tract at residues 249 to 255 (GVGKPED) is RNA binding. The active-site Nucleophile is the Asp268. An RNA binding; important for wobble base 34 recognition region spans residues 273–277 (TRNAR). Zn(2+)-binding residues include Cys306, Cys308, Cys311, and His337.

The protein belongs to the queuine tRNA-ribosyltransferase family. In terms of assembly, homodimer. Within each dimer, one monomer is responsible for RNA recognition and catalysis, while the other monomer binds to the replacement base PreQ1. Zn(2+) is required as a cofactor.

The enzyme catalyses 7-aminomethyl-7-carbaguanine + guanosine(34) in tRNA = 7-aminomethyl-7-carbaguanosine(34) in tRNA + guanine. Its pathway is tRNA modification; tRNA-queuosine biosynthesis. Its function is as follows. Catalyzes the base-exchange of a guanine (G) residue with the queuine precursor 7-aminomethyl-7-deazaguanine (PreQ1) at position 34 (anticodon wobble position) in tRNAs with GU(N) anticodons (tRNA-Asp, -Asn, -His and -Tyr). Catalysis occurs through a double-displacement mechanism. The nucleophile active site attacks the C1' of nucleotide 34 to detach the guanine base from the RNA, forming a covalent enzyme-RNA intermediate. The proton acceptor active site deprotonates the incoming PreQ1, allowing a nucleophilic attack on the C1' of the ribose to form the product. After dissociation, two additional enzymatic reactions on the tRNA convert PreQ1 to queuine (Q), resulting in the hypermodified nucleoside queuosine (7-(((4,5-cis-dihydroxy-2-cyclopenten-1-yl)amino)methyl)-7-deazaguanosine). The polypeptide is Queuine tRNA-ribosyltransferase (Histophilus somni (strain 129Pt) (Haemophilus somnus)).